Reading from the N-terminus, the 751-residue chain is Photosystem I P700 chlorophyll a apoprotein A1 (751 aa).

The next 8 membrane-spanning stretches (helical) occupy residues 73-96, 159-182, 198-222, 294-312, 349-372, 388-414, 436-458, and 533-551; these read VFSA…FHGA, LYST…WHYH, MNHH…HIAL, MAHH…GHQY, WHAQ…HHMY, LSLF…IFMV, AIIS…LYIH, and FMVH…LILL. Positions 575 and 584 each coordinate [4Fe-4S] cluster. 2 helical membrane passes run 591-612 and 665-687; these read HVFL…HFSW and LSAY…MFLF. His-676 lines the chlorophyll a' pocket. The chlorophyll a site is built by Met-684 and Tyr-692. Trp-693 is a binding site for phylloquinone. Residues 725 to 745 form a helical membrane-spanning segment; it reads AVGVAHYLLGGIATTWSFFLA.

The protein belongs to the PsaA/PsaB family. As to quaternary structure, the PsaA/B heterodimer binds the P700 chlorophyll special pair and subsequent electron acceptors. PSI consists of a core antenna complex that captures photons, and an electron transfer chain that converts photonic excitation into a charge separation. The eukaryotic PSI reaction center is composed of at least 11 subunits. P700 is a chlorophyll a/chlorophyll a' dimer, A0 is one or more chlorophyll a, A1 is one or both phylloquinones and FX is a shared 4Fe-4S iron-sulfur center. is required as a cofactor.

The protein resides in the plastid. Its subcellular location is the chloroplast thylakoid membrane. The enzyme catalyses reduced [plastocyanin] + hnu + oxidized [2Fe-2S]-[ferredoxin] = oxidized [plastocyanin] + reduced [2Fe-2S]-[ferredoxin]. Functionally, psaA and PsaB bind P700, the primary electron donor of photosystem I (PSI), as well as the electron acceptors A0, A1 and FX. PSI is a plastocyanin/cytochrome c6-ferredoxin oxidoreductase, converting photonic excitation into a charge separation, which transfers an electron from the donor P700 chlorophyll pair to the spectroscopically characterized acceptors A0, A1, FX, FA and FB in turn. Oxidized P700 is reduced on the lumenal side of the thylakoid membrane by plastocyanin or cytochrome c6. The protein is Photosystem I P700 chlorophyll a apoprotein A1 of Ostreococcus tauri.